A 654-amino-acid chain; its full sequence is Spindle assembly abnormal protein 6 homolog (654 aa).

One can recognise a PISA domain in the interval 39 to 91 (VHRKDLVIRLTDDTDPFFLYNLVISEEDFQSLKLQQGLLVDFLAFPQKFIDLL). A coiled-coil region spans residues 175 to 471 (TRQLHITQET…QLLKNNEKLI (297 aa)). S509 carries the phosphoserine modification. Residues 568 to 589 (ASIDGQPGAAVNRPCSNDKENG) form a disordered region. Residue S612 is modified to Phosphoserine. The span at 634–644 (SKPTVLPSSSS) shows a compositional bias: low complexity. The tract at residues 634-654 (SKPTVLPSSSSAYFPGQLPSS) is disordered. S654 is subject to Phosphoserine.

Nine homodimers form a cartwheel structure with an internal diameter of 23 nm and radial spokes connecting to the microtubule triplets. Forms a complex with CPAP and STIL. Interacts with FBXW5. Interacts with NUP62 and TUBG1 at the centrosome. Interacts with CENATAC; the interaction increases with CENATAC acetylation. Interacts with FZR1; the interaction is regulated by CENATAC and leads to SASS6 proteasomal degradation. Ubiquitinated by the SCF(FBXW5) E3 ubiquitin-protein ligase complex during S phase, leading to its degradation and preventing centriole reduplication. Ubiquitinated by the anaphase promoting complex/cyclosome (APC/C) E3 ubiquitin-protein ligase complex, leading to its degradation and preventing centriole reduplication.

Its subcellular location is the cytoplasm. It is found in the cytoskeleton. The protein localises to the microtubule organizing center. The protein resides in the centrosome. It localises to the centriole. In terms of biological role, central scaffolding component of the centrioles ensuring their 9-fold symmetry. Required for centrosome biogenesis and duplication. Required both for mother-centriole-dependent centriole duplication and deuterosome-dependent centriole amplification in multiciliated cells. Not required for centriole formation in embryonic stem cells but necessary to maintain centriole architecture. Required for the recruitment of STIL to the procentriole and for STIL-mediated centriole amplification. The polypeptide is Spindle assembly abnormal protein 6 homolog (Mus musculus (Mouse)).